The sequence spans 124 residues: UPF0102 protein Noca_3248 (124 aa).

This sequence belongs to the UPF0102 family.

The sequence is that of UPF0102 protein Noca_3248 from Nocardioides sp. (strain ATCC BAA-499 / JS614).